A 620-amino-acid chain; its full sequence is Chaperone protein HscA homolog (620 aa).

It belongs to the heat shock protein 70 family.

Chaperone involved in the maturation of iron-sulfur cluster-containing proteins. Has a low intrinsic ATPase activity which is markedly stimulated by HscB. The protein is Chaperone protein HscA homolog of Pasteurella multocida (strain Pm70).